Reading from the N-terminus, the 497-residue chain is Carboxylesterase (497 aa).

Catalysis depends on Ser185, which acts as the Acyl-ester intermediate. Residues Glu319 and His415 each act as charge relay system in the active site.

It belongs to the type-B carboxylesterase/lipase family.

The protein localises to the secreted. The catalysed reaction is a carboxylic ester + H2O = an alcohol + a carboxylate + H(+). The sequence is that of Carboxylesterase from Thermobifida fusca (strain YX).